The sequence spans 131 residues: Small ribosomal subunit protein bS6 (131 aa).

The tract at residues 98-131 (EASPMVKAKDERRERREDFANETADDSEAGDSEE) is disordered. Residues 104 to 116 (KAKDERRERREDF) are compositionally biased toward basic and acidic residues. The span at 120–131 (TADDSEAGDSEE) shows a compositional bias: acidic residues.

It belongs to the bacterial ribosomal protein bS6 family.

In terms of biological role, binds together with bS18 to 16S ribosomal RNA. The sequence is that of Small ribosomal subunit protein bS6 from Klebsiella pneumoniae (strain 342).